The following is a 324-amino-acid chain: BURP domain-containing protein 5 (324 aa).

An N-terminal signal peptide occupies residues 1–30; it reads MCATLCTLLDEISILILMLLLIQLEIRVSA. Residues 109–323 form the BURP domain; that stretch reads FFLETNLQSS…QPDVVVWTRR (215 aa).

In terms of tissue distribution, expressed in panicles.

The protein is BURP domain-containing protein 5 (BURP5) of Oryza sativa subsp. japonica (Rice).